Consider the following 69-residue polypeptide: Conotoxin Eb6.14 (69 aa).

The signal sequence occupies residues 1–17 (VLIIAVLFLTACQLTTA). Positions 18–41 (ETYSRGRQKHRARRSTDKNSKWTR) are excised as a propeptide. 3 disulfide bridges follow: cysteine 43–cysteine 57, cysteine 50–cysteine 61, and cysteine 56–cysteine 68.

This sequence belongs to the conotoxin O1 superfamily. As to expression, expressed by the venom duct.

The protein localises to the secreted. This Conus ebraeus (Hebrew cone) protein is Conotoxin Eb6.14 (E1).